The primary structure comprises 554 residues: 3-(3-hydroxy-phenyl)propionate/3-hydroxycinnamic acid hydroxylase (554 aa).

Residues Q17–K46 and F285–D295 each bind FAD.

The protein belongs to the PheA/TfdB FAD monooxygenase family. FAD serves as cofactor.

The enzyme catalyses 3-(3-hydroxyphenyl)propanoate + NADH + O2 + H(+) = 3-(2,3-dihydroxyphenyl)propanoate + NAD(+) + H2O. It carries out the reaction (2E)-3-(3-hydroxyphenyl)prop-2-enoate + NADH + O2 + H(+) = (2E)-3-(2,3-dihydroxyphenyl)prop-2-enoate + NAD(+) + H2O. It functions in the pathway aromatic compound metabolism; 3-phenylpropanoate degradation. Catalyzes the insertion of one atom of molecular oxygen into position 2 of the phenyl ring of 3-(3-hydroxyphenyl)propionate (3-HPP) and hydroxycinnamic acid (3HCI). The polypeptide is 3-(3-hydroxy-phenyl)propionate/3-hydroxycinnamic acid hydroxylase (Klebsiella pneumoniae (strain 342)).